A 408-amino-acid chain; its full sequence is Peptidase T (408 aa).

His-78 contributes to the Zn(2+) binding site. The active site involves Asp-80. Asp-140 is a Zn(2+) binding site. Glu-173 (proton acceptor) is an active-site residue. 3 residues coordinate Zn(2+): Glu-174, Asp-196, and His-379.

Belongs to the peptidase M20B family. The cofactor is Zn(2+).

The protein localises to the cytoplasm. It carries out the reaction Release of the N-terminal residue from a tripeptide.. Cleaves the N-terminal amino acid of tripeptides. The polypeptide is Peptidase T (Escherichia coli O6:K15:H31 (strain 536 / UPEC)).